The sequence spans 386 residues: MVLEATMICIDNSEWMRNGDYSPSRLQAQTEAVNLLCGAKTQSNPENTVGILTMAGKGVRVLTTPTSDLGKILACMHGLDVGGEINLTAAIQIAQLALKHRQNKNQRQRIIVFAGSPIKYEKKALEIVGKRLKKNSVSLDIVNFGEDDDEEKPQKLEALLTAVNNNDGSHIVHVPSGANALSDVLLSTPVFTGDEGASGYVSAAAAAAAAGGDFDFGVDPNIDPELALALRVSMEEERARQEAAAKKAADEAGQKDKDGDTASASQETVARTTDKNAEPMDEDSALLDQAIAMSVGDVNMSEAADEDQDLALALQMSMSGEESSEATGAGNNLLGNQAFISSVLSSLPGVDPNDPAVKELLASLPDESKRTEEEESSSKKGEDEKK.

The VWFA domain occupies Ala-5–Val-190. A UIM 1 domain is found at Asn-221–Arg-240. Over residues Gln-241 to Asp-260 the composition is skewed to basic and acidic residues. Residues Gln-241–Asp-281 form a disordered region. Over residues Ala-262–Arg-271 the composition is skewed to polar residues. Ser-263 is modified (phosphoserine). 2 consecutive UIM domains span residues Glu-282–Ser-301 and Asp-305–Ser-324. A disordered region spans residues Leu-344–Lys-386. Positions Asp-366–Lys-386 are enriched in basic and acidic residues.

Belongs to the proteasome subunit S5A family. In terms of assembly, component of the 19S regulatory particle (RP/PA700) base subcomplex of the 26S proteasome. The 26S proteasome is composed of a core protease (CP), known as the 20S proteasome, capped at one or both ends by the 19S regulatory particle (RP/PA700). The RP/PA700 complex is composed of at least 17 different subunits in two subcomplexes, the base and the lid, which form the portions proximal and distal to the 20S proteolytic core, respectively. Interacts with PI4KG4. Interacts with RAD23s and DSK2s via its UIM3 and UIM1 motif, respectively. Interacts with 'Lys-48'-linked polyubiquitin chains via its UIM1 motif. In terms of processing, phosphorylated by PI4KG4 in vitro. Ubiquitous with highest expression in flowers.

Its function is as follows. Plays a role in maintaining the structural integrity of the 19S regulatory particle (RP), subcomplex of the 26S proteasome. Plays a major role in both the direct and indirect recognition of ubiquitinated substrates of ubiquitin/26S proteasome-mediated proteolysis (UPP). Binds and presumably selects ubiquitin-conjugates for destruction. Prefers multiubiquitin chains rather than single ubiquitins, with a binding affinity for 'Lys-48'-linked ubiquitin chains. Acts as a potential docking subunit for both ubiquitin receptors RAD23s and DSK2s. Plays a role in the growth and development via the proteasome-dependent degradation of the ABA-signaling protein ABI5/DPBF1. Plays an important role for balancing cell expansion with cell proliferation rates during shoot development. The polypeptide is 26S proteasome non-ATPase regulatory subunit 4 homolog (RPN10) (Arabidopsis thaliana (Mouse-ear cress)).